The primary structure comprises 431 residues: MAEMDVSSWKPTKLETKPFSLDSGHYTALAFVLAVCVPQAPHGTALRYGLLLLQITCGVQAFLAQPPSVPDRAVLYTSGVLMGNLVARYFDRLYTTVPEKTFHRIIDSQTPEDTTQLSAPKRFFWALELFSVTRGIGWNWRVAGIPKSPVPITRFQFAAAQLLRWTVMYAGLHLVNVTCQVVSSNPNAIPSLPGNLHIYALIVCGFAITIYSHFAILMLPLSALCVGLQVGPRSWQAVASWPPNFGSVREAYSIRRFWGYTWHQQLRRQAGAPGAYLISLLPDSVMTSKRTAVKLARRYSLLMMSFVISGLIHACGTYQVTRALGLPLSDGGEMKYFALQGMAIIAEDFGCWVLGIDDRGTQPGVMRRWMGYAITLSWYIWSRVQLKGVPVALAMGIEDERGDLFAALELVRVSAVAVPGNFVAMAWELIW.

An N-linked (GlcNAc...) asparagine glycan is attached at asparagine 176. Transmembrane regions (helical) follow at residues 198–218, 301–321, 336–356, and 404–424; these read IYALIVCGFAITIYSHFAILM, LLMMSFVISGLIHACGTYQVT, YFALQGMAIIAEDFGCWVLGI, and LFAALELVRVSAVAVPGNFVA.

The protein belongs to the wax synthase family.

The protein resides in the membrane. The protein operates within secondary metabolite biosynthesis; terpenoid biosynthesis. O-Mevalon transferase; part of the gene cluster that mediates the biosynthesis of macrophorins, isoprenoid epoxycyclohexenones containing cyclized drimane moieties. The first step of the pathway is the synthesis of 6-methylsalicylic acid (6-MSA) by the polyketide synthase macA. 6-MSA is then converted to m-cresol by the decarboxylase macB. The cytochrome P450 monooxygenase macC then catalyzes the oxidation of m-cresol to toluquinol. Epoxidation of toluquinol is then performed by the short chain dehydrogenase macD, with the help of macE, and a further prenylation by macG leads to 7-deacetoxyyanuthone A. The next step is the hydroxylation of C-22 of 7-deacetoxyyanuthone A by the cytochrome P450 monooxygenase macH to yield 22-deacetylyanuthone A. O-Mevalon transferase macI then attaches mevalon to the hydroxyl group of 22-deacetylyanuthone A to produce yanuthone E. The terpene cyclase macJ catalyzes the cyclization of 22-deacetylyanuthone A to macrophorin A. MacJ is also able to catalyze cyclization of yanuthone E and 7-deacetoxyyanuthone A to their corresponding macrophorins. The macJ products can be further modified by macH and macJ, as well as by the FAD-dependent monooxygenase macF, to produce additional macrophorins, including 4'-oxomacrophorin A, 4'-oxomacrophorin D and 4'-oxomacrophorin E. The polypeptide is O-Mevalon transferase macI (Penicillium terrestre).